The sequence spans 301 residues: Probable alpha-L-glutamate ligase 1 (301 aa).

One can recognise an ATP-grasp domain in the interval 104–287 (MQLMSRRGIG…VAGAIIDFVE (184 aa)). Residues Lys141, 178-179 (EY), Asp187, and 211-213 (RSN) contribute to the ATP site. 3 residues coordinate Mg(2+): Asp248, Glu260, and Asn262. Residues Asp248, Glu260, and Asn262 each coordinate Mn(2+).

It belongs to the RimK family. Requires Mg(2+) as cofactor. It depends on Mn(2+) as a cofactor.

In Shewanella baltica (strain OS185), this protein is Probable alpha-L-glutamate ligase 1.